The chain runs to 123 residues: Ribonuclease P protein component (123 aa).

It belongs to the RnpA family. As to quaternary structure, consists of a catalytic RNA component (M1 or rnpB) and a protein subunit.

The enzyme catalyses Endonucleolytic cleavage of RNA, removing 5'-extranucleotides from tRNA precursor.. In terms of biological role, RNaseP catalyzes the removal of the 5'-leader sequence from pre-tRNA to produce the mature 5'-terminus. It can also cleave other RNA substrates such as 4.5S RNA. The protein component plays an auxiliary but essential role in vivo by binding to the 5'-leader sequence and broadening the substrate specificity of the ribozyme. This chain is Ribonuclease P protein component, found in Streptomyces avermitilis (strain ATCC 31267 / DSM 46492 / JCM 5070 / NBRC 14893 / NCIMB 12804 / NRRL 8165 / MA-4680).